The primary structure comprises 466 residues: Chromosomal replication initiator protein DnaA (466 aa).

Positions 1–86 (MSLSLWQQCL…EVGTKPVTQT (86 aa)) are domain I, interacts with DnaA modulators. A domain II region spans residues 86-129 (TLKTPVHNVVAPTQTTTAQPQRVAPAARSGWDNVPAPAEPTYRS). A domain III, AAA+ region region spans residues 130–346 (NVNVKHTFDN…GALNRVIANA (217 aa)). Residues glycine 174, glycine 176, lysine 177, and threonine 178 each coordinate ATP. The tract at residues 347–466 (NFTGRAITID…FSNLIRTLSS (120 aa)) is domain IV, binds dsDNA.

This sequence belongs to the DnaA family. In terms of assembly, oligomerizes as a right-handed, spiral filament on DNA at oriC.

It is found in the cytoplasm. Functionally, plays an essential role in the initiation and regulation of chromosomal replication. ATP-DnaA binds to the origin of replication (oriC) to initiate formation of the DNA replication initiation complex once per cell cycle. Binds the DnaA box (a 9 base pair repeat at the origin) and separates the double-stranded (ds)DNA. Forms a right-handed helical filament on oriC DNA; dsDNA binds to the exterior of the filament while single-stranded (ss)DNA is stabiized in the filament's interior. The ATP-DnaA-oriC complex binds and stabilizes one strand of the AT-rich DNA unwinding element (DUE), permitting loading of DNA polymerase. After initiation quickly degrades to an ADP-DnaA complex that is not apt for DNA replication. Binds acidic phospholipids. The chain is Chromosomal replication initiator protein DnaA from Salmonella choleraesuis (strain SC-B67).